We begin with the raw amino-acid sequence, 921 residues long: Protein translocase subunit SecA (921 aa).

ATP is bound by residues Gln-87, 105–109, and Asp-516; that span reads GEGKT. 4 residues coordinate Zn(2+): Cys-905, Cys-907, Cys-916, and His-917.

The protein belongs to the SecA family. Monomer and homodimer. Part of the essential Sec protein translocation apparatus which comprises SecA, SecYEG and auxiliary proteins SecDF-YajC and YidC. Requires Zn(2+) as cofactor.

The protein localises to the cell inner membrane. The protein resides in the cytoplasm. It carries out the reaction ATP + H2O + cellular proteinSide 1 = ADP + phosphate + cellular proteinSide 2.. Functionally, part of the Sec protein translocase complex. Interacts with the SecYEG preprotein conducting channel. Has a central role in coupling the hydrolysis of ATP to the transfer of proteins into and across the cell membrane, serving both as a receptor for the preprotein-SecB complex and as an ATP-driven molecular motor driving the stepwise translocation of polypeptide chains across the membrane. The sequence is that of Protein translocase subunit SecA from Albidiferax ferrireducens (strain ATCC BAA-621 / DSM 15236 / T118) (Rhodoferax ferrireducens).